Here is an 88-residue protein sequence, read N- to C-terminus: Augerpeptide Hhe9a (88 aa).

Residues 1–21 (MMTKTGLVLLFAFLLVFPVSS) form the signal peptide. A propeptide spanning residues 22-49 (LPMDAEAGHARLEMDKRDAGNEAWTRLL) is cleaved from the precursor. Intrachain disulfides connect Cys56–Cys71, Cys61–Cys73, and Cys67–Cys86.

Expressed by the venom duct.

Its subcellular location is the secreted. This chain is Augerpeptide Hhe9a, found in Hastula hectica (Sea snail).